Consider the following 149-residue polypeptide: MFSPQSRLRHAVADTFAMVVYCSVVNMCIEVFLSGMSFEQSFYSRLVAIPVNILIAWPYGMYRDLFMRAARKVSPSGWIKNLADILAYVTFQSPVYVAILLVVGADWHQIMAAVSSNIVVSMLMGAVYGYFLDYCRRLFKVSRYQQVKA.

4 consecutive transmembrane segments (helical) span residues 16–36 (FAMVVYCSVVNMCIEVFLSGM), 46–66 (LVAIPVNILIAWPYGMYRDLF), 85–105 (ILAYVTFQSPVYVAILLVVGA), and 112–132 (AAVSSNIVVSMLMGAVYGYFL).

This sequence belongs to the AlaE exporter family.

It is found in the cell inner membrane. Exports L-alanine. The sequence is that of L-alanine exporter AlaE from Shigella flexneri.